The following is a 190-amino-acid chain: MELILGSQSSARANLLKEHGIKFEQKALYFDEESLKTTDPREFVYLACKGKLEKAKELLANNCAIVVADSVVSVGNRMQRKAKNKREALEFLKRQNGNEIEVLTCSALISPVLEWLDLSVFRARLKAFDCSEIEKYLESGLWQGSAGCVRLEDFHKPYIKSSSKNLSVGLGLNVEGLLGALKLGVKLSLL.

D69 acts as the Proton acceptor in catalysis.

Belongs to the Maf family. It depends on a divalent metal cation as a cofactor.

The protein localises to the cytoplasm. It carries out the reaction a ribonucleoside 5'-triphosphate + H2O = a ribonucleoside 5'-phosphate + diphosphate + H(+). The enzyme catalyses a 2'-deoxyribonucleoside 5'-triphosphate + H2O = a 2'-deoxyribonucleoside 5'-phosphate + diphosphate + H(+). Nucleoside triphosphate pyrophosphatase. May have a dual role in cell division arrest and in preventing the incorporation of modified nucleotides into cellular nucleic acids. This Helicobacter pylori (strain J99 / ATCC 700824) (Campylobacter pylori J99) protein is Nucleoside triphosphate pyrophosphatase.